We begin with the raw amino-acid sequence, 357 residues long: UPF0283 membrane protein BAbS19_I09770 (357 aa).

Positions 1 to 36 (MSDKTPRKPTAFRLEQPARVSAASEQEEPRRPRAVK) are disordered. Over residues 27–36 (EEPRRPRAVK) the composition is skewed to basic and acidic residues. A run of 2 helical transmembrane segments spans residues 78-98 (ILFG…TEDL) and 109-129 (LGWT…AIIL).

Belongs to the UPF0283 family.

The protein resides in the cell inner membrane. The polypeptide is UPF0283 membrane protein BAbS19_I09770 (Brucella abortus (strain S19)).